We begin with the raw amino-acid sequence, 825 residues long: Tuftelin-interacting protein 11 (825 aa).

The segment at 1–135 (MSMSHLYGKD…RTFAGGIKSN (135 aa)) is disordered. Acidic residues predominate over residues 11-25 (EDSDGVEMENFEITD). 2 stretches are compositionally biased toward basic and acidic residues: residues 41–61 (QTKE…DERP) and 85–114 (PAAE…EAKK). Residues 122 to 135 (KPSQRTFAGGIKSN) are compositionally biased toward polar residues. The region spanning 145–191 (TKGIGQKLLQKMGYVQGRGLGKNAQGIIAPIEAKQRKGKGAVGAYGS) is the G-patch domain.

This sequence belongs to the TFP11/STIP family. Identified in the spliceosome C complex.

Its subcellular location is the nucleus. Functionally, involved in pre-mRNA splicing, specifically in spliceosome disassembly during late-stage splicing events. This is Tuftelin-interacting protein 11 (tfip11) from Xenopus tropicalis (Western clawed frog).